The following is an 880-amino-acid chain: Interference hedgehog (880 aa).

The first 20 residues, 1 to 20, serve as a signal peptide directing secretion; the sequence is MPSIVSSLLLVVLLTSPLGA. The Extracellular portion of the chain corresponds to 21–703; that stretch reads IPVLYPSPPP…SHNETFSMSP (683 aa). 4 consecutive Ig-like C2-type domains span residues 37–142, 154–235, 251–339, and 345–432; these read PGVR…TARL, PVTS…STSS, PYLL…FIQV, and PQIV…LQVT. 4 cysteine pairs are disulfide-bonded: Cys-60/Cys-126, Cys-172/Cys-219, Cys-275/Cys-323, and Cys-366/Cys-414. N-linked (GlcNAc...) asparagine glycosylation is found at Asn-79, Asn-102, and Asn-208. Positions 435–468 are disordered; sequence PIHSESTQQSDHNHSKANRGRRPAQMIPPSAPNV. 2 N-linked (GlcNAc...) asparagine glycosylation sites follow: Asn-447 and Asn-467. Fibronectin type-III domains lie at 462–570 and 578–673; these read PPSA…LQPG and VPEM…TQRP. The heparin site is built by Arg-498, Lys-504, Lys-506, and Arg-544. N-linked (GlcNAc...) asparagine glycosylation occurs at Asn-560. The disordered stretch occupies residues 665–699; sequence LKQGRTQRPMVSTTEEATLQTGVRDTTTPSHNETF. Positions 668-699 are enriched in polar residues; sequence GRTQRPMVSTTEEATLQTGVRDTTTPSHNETF. N-linked (GlcNAc...) asparagine glycosylation occurs at Asn-696. The chain crosses the membrane as a helical span at residues 704–724; sequence IVTGTIGGGAVLILFVVTTCL. The Cytoplasmic portion of the chain corresponds to 725 to 880; that stretch reads CMWRRRNSRA…SSGSLNSVGV (156 aa). The interval 797-880 is disordered; it reads YFQRQPTYDY…SSGSLNSVGV (84 aa). 2 stretches are compositionally biased toward low complexity: residues 827-839 and 864-880; these read RAGS…NNLN and SSRS…SVGV.

The protein belongs to the immunoglobulin superfamily. IHOG family. In terms of assembly, homodimer. Heterotetramer; 2 iHog chains bind 2 hh chains when facilitated by heparin, heparin is required to promote high-affinity interactions between hh and iHog.

Its subcellular location is the membrane. Its function is as follows. Mediates response to the active Hedgehog (Hh) protein signal in embryos, functioning upstream or at the level of patched (ptc). The sequence is that of Interference hedgehog from Drosophila ananassae (Fruit fly).